Reading from the N-terminus, the 263-residue chain is Hydroxyethylthiazole kinase (263 aa).

Residue Met41 participates in substrate binding. ATP is bound by residues Arg117 and Ser163. Residue Gly190 coordinates substrate.

This sequence belongs to the Thz kinase family. Mg(2+) is required as a cofactor.

It catalyses the reaction 5-(2-hydroxyethyl)-4-methylthiazole + ATP = 4-methyl-5-(2-phosphooxyethyl)-thiazole + ADP + H(+). Its pathway is cofactor biosynthesis; thiamine diphosphate biosynthesis; 4-methyl-5-(2-phosphoethyl)-thiazole from 5-(2-hydroxyethyl)-4-methylthiazole: step 1/1. Its function is as follows. Catalyzes the phosphorylation of the hydroxyl group of 4-methyl-5-beta-hydroxyethylthiazole (THZ). The polypeptide is Hydroxyethylthiazole kinase (Lactiplantibacillus plantarum (strain ATCC BAA-793 / NCIMB 8826 / WCFS1) (Lactobacillus plantarum)).